Reading from the N-terminus, the 86-residue chain is Omega-theraphotoxin-Hhn1f 1 (86 aa).

A signal peptide spans 1 to 21; it reads MKSIVFVALFGLALLAVVCSA. The propeptide occupies 22–50; sequence SEDAHKELLKEVVRAMVVDKTDAVQAEER. 3 cysteine pairs are disulfide-bonded: C52/C66, C59/C71, and C65/C78.

It belongs to the neurotoxin 10 (Hwtx-1) family. 17 (Hntx-9) subfamily. As to expression, expressed by the venom gland.

Its subcellular location is the secreted. In terms of biological role, ion channel inhibitor. This chain is Omega-theraphotoxin-Hhn1f 1, found in Cyriopagopus hainanus (Chinese bird spider).